The primary structure comprises 470 residues: Ribulose bisphosphate carboxylase large chain (470 aa).

2 residues coordinate substrate: Asn-118 and Thr-168. Catalysis depends on Lys-170, which acts as the Proton acceptor. Residue Lys-172 coordinates substrate. Mg(2+)-binding residues include Lys-196, Asp-198, and Glu-199. An N6-carboxylysine modification is found at Lys-196. The active-site Proton acceptor is His-289. 3 residues coordinate substrate: Arg-290, His-322, and Ser-374.

Belongs to the RuBisCO large chain family. Type I subfamily. Heterohexadecamer of 8 large chains and 8 small chains; disulfide-linked. The disulfide link is formed within the large subunit homodimers. RuBisCO interacts with the C-terminus of CcmM, and can be found in complexes that also include carbonic anhydrase (ccaA). RuBisCO associates with both the internal and shell portion of carboxysomes. Mg(2+) serves as cofactor. In terms of processing, the disulfide bond which can form in the large chain dimeric partners within the hexadecamer appears to be associated with oxidative stress and protein turnover.

Its subcellular location is the carboxysome. The catalysed reaction is 2 (2R)-3-phosphoglycerate + 2 H(+) = D-ribulose 1,5-bisphosphate + CO2 + H2O. It catalyses the reaction D-ribulose 1,5-bisphosphate + O2 = 2-phosphoglycolate + (2R)-3-phosphoglycerate + 2 H(+). Functionally, ruBisCO catalyzes two reactions: the carboxylation of D-ribulose 1,5-bisphosphate, the primary event in carbon dioxide fixation, as well as the oxidative fragmentation of the pentose substrate in the photorespiration process. Both reactions occur simultaneously and in competition at the same active site. The protein is Ribulose bisphosphate carboxylase large chain of Synechocystis sp. (strain ATCC 27184 / PCC 6803 / Kazusa).